Consider the following 109-residue polypeptide: MSAFVTKAEEMIKSHPYFQLSASWCPDCVYANSIWNKLNVQDKVFVFDIGSLPRNEQEKWRIAFQKVVGSRNLPTIVVNGKFWGTESQLHRFEAKGTLEEELTKIGLLP.

In terms of domain architecture, Glutaredoxin spans 5 to 109 (VTKAEEMIKS…EELTKIGLLP (105 aa)). A disulfide bridge links cysteine 25 with cysteine 28.

It belongs to the glutaredoxin family. In terms of assembly, monomer.

It is found in the cytoplasm. In terms of biological role, glutathione-dependent oxidoreductase with lower activity compared to the other members of the glutaredoxin family. The disulfide bond functions as an electron carrier in the glutathione-dependent synthesis of deoxyribonucleotides by the enzyme ribonucleotide reductase. This is Glutaredoxin-8 (GRX8) from Saccharomyces cerevisiae (strain ATCC 204508 / S288c) (Baker's yeast).